We begin with the raw amino-acid sequence, 252 residues long: Pantothenate synthetase (252 aa).

29–36 (MGNLHAGH) serves as a coordination point for ATP. The active-site Proton donor is His36. Gln60 contributes to the (R)-pantoate binding site. Position 60 (Gln60) interacts with beta-alanine. ATP is bound at residue 146 to 149 (GEKD). Gln152 is a binding site for (R)-pantoate. ATP contacts are provided by residues Val175 and 183 to 186 (CSSR).

Belongs to the pantothenate synthetase family. As to quaternary structure, homodimer.

Its subcellular location is the cytoplasm. It carries out the reaction (R)-pantoate + beta-alanine + ATP = (R)-pantothenate + AMP + diphosphate + H(+). The protein operates within cofactor biosynthesis; (R)-pantothenate biosynthesis; (R)-pantothenate from (R)-pantoate and beta-alanine: step 1/1. In terms of biological role, catalyzes the condensation of pantoate with beta-alanine in an ATP-dependent reaction via a pantoyl-adenylate intermediate. The polypeptide is Pantothenate synthetase (Legionella pneumophila subsp. pneumophila (strain Philadelphia 1 / ATCC 33152 / DSM 7513)).